We begin with the raw amino-acid sequence, 310 residues long: tRNA-cytidine(32) 2-sulfurtransferase (310 aa).

The PP-loop motif motif lies at 58–63 (SGGKDS). Residues Cys133, Cys136, and Cys224 each coordinate [4Fe-4S] cluster.

This sequence belongs to the TtcA family. As to quaternary structure, homodimer. Requires Mg(2+) as cofactor. [4Fe-4S] cluster is required as a cofactor.

Its subcellular location is the cytoplasm. The catalysed reaction is cytidine(32) in tRNA + S-sulfanyl-L-cysteinyl-[cysteine desulfurase] + AH2 + ATP = 2-thiocytidine(32) in tRNA + L-cysteinyl-[cysteine desulfurase] + A + AMP + diphosphate + H(+). Its pathway is tRNA modification. Functionally, catalyzes the ATP-dependent 2-thiolation of cytidine in position 32 of tRNA, to form 2-thiocytidine (s(2)C32). The sulfur atoms are provided by the cysteine/cysteine desulfurase (IscS) system. This is tRNA-cytidine(32) 2-sulfurtransferase from Paracidovorax citrulli (strain AAC00-1) (Acidovorax citrulli).